The following is a 242-amino-acid chain: Probable 2-phosphosulfolactate phosphatase (242 aa).

It belongs to the ComB family. It depends on Mg(2+) as a cofactor.

The enzyme catalyses (2R)-O-phospho-3-sulfolactate + H2O = (2R)-3-sulfolactate + phosphate. This Picosynechococcus sp. (strain ATCC 27264 / PCC 7002 / PR-6) (Agmenellum quadruplicatum) protein is Probable 2-phosphosulfolactate phosphatase.